The chain runs to 416 residues: Iron/alpha-ketoglutarate-dependent dioxygenase asqJ (416 aa).

The segment at 1–53 (MGYPKAFTSSDSEPEPDLSRDLGNPVMGNPGVVSRSSSTVAQHSVRNNPTGPD) is disordered. Polar residues predominate over residues 34–50 (SRSSSTVAQHSVRNNPT). The Fe cation site is built by His-242, Asp-244, and His-319.

This sequence belongs to the PhyH family. In terms of assembly, homodimer. It depends on Fe cation as a cofactor.

It catalyses the reaction (-)-4'-methoxycyclopeptine + 2-oxoglutarate + O2 = (Z)-4'-methoxydehydrocyclopeptine + succinate + CO2 + H2O. The enzyme catalyses (Z)-4'-methoxydehydrocyclopeptine + 2-oxoglutarate + O2 = (-)-4'-methoxycyclopenine + succinate + CO2. The catalysed reaction is (-)-cyclopeptine + 2-oxoglutarate + O2 = (Z)-dehydrocyclopeptine + succinate + CO2 + H2O. It carries out the reaction (Z)-dehydrocyclopeptine + 2-oxoglutarate + O2 = (-)-cyclopenine + succinate + CO2. It participates in secondary metabolite biosynthesis. The protein operates within alkaloid biosynthesis. Its pathway is mycotoxin biosynthesis. In terms of biological role, iron/alpha-ketoglutarate-dependent dioxygenase; part of the gene cluster that mediates the biosynthesis of the aspoquinolone mycotoxins. Within the pathway, the iron/alpha-ketoglutarate-dependent dioxygenase asqJ acts as a (-)-cyclopenine synthase that converts 4'-methoxycyclopeptin into 4'-methoxydehydrocyclopeptin through dehydrogenation to form a double bond between C-alpha and C-beta of the O-methyltyrosine side chain. AsqJ is a very unique dioxygenase which is capable of catalyzing radical-mediated dehydrogenation and epoxidation reactions sequentially on a 6,7-benzo-diazepinedione substrate in the 4'-methoxyviridicatin biosynthetic pathway. AsqJ is also capable of converting cyclopeptin into dehydrocyclopeptin. The first step of the pathway is catalyzed by the nonribosomal peptide synthetase asqK that condenses anthranilic acid and O-methyl-L-tyrosine to produce 4'-methoxycyclopeptin. 4'-methoxycyclopeptin is then converted to 4'-methoxydehydrocyclopeptin by the ketoglutarate-dependent dioxygenase asqJ. AsqJ also converts its first product 4'-methoxydehydrocyclopeptin to 4'-methoxycyclopenin. The following conversion of 4'-methoxycyclopenin into 4'-methoxyviridicatin is catalyzed by the cyclopenase asqI. 4'-methoxyviridicatin is the precursor of quinolone natural products, and is further converted to quinolinone B. The prenyltransferase asqH1 then catalyzes the canonical Friedel-Crafts alkylation of quinolinone B with dimethylallyl cation to yield dimethylallyl quinolone, which is subjected to FAD-dependent dehydrogenation by the FAD-linked oxidoreductase asqF to yield conjugated aryl diene. The delta(3') double bond then serves as the site of the second alkylation with DMAPP catalyzed by the prenyltransferase asqH2 to yield a carbenium ion intermediate, which can be attacked by H(2)O to yield a styrenyl quinolone containing a C3'-hydroxyprenyl chain. The FAD-dependent monooxygenase asqG performs epoxidation of the terminal C7'-C8' olefin. Finally, after dehydratation of the epoxide at C3 by asqC, the quinolone epoxide rearrangement protein asqO catalyzes an enzymatic 3-exo-tet cyclization to yield the cyclopropyl-THF ring system in aspoquinolone. The polypeptide is Iron/alpha-ketoglutarate-dependent dioxygenase asqJ (Emericella nidulans (strain FGSC A4 / ATCC 38163 / CBS 112.46 / NRRL 194 / M139) (Aspergillus nidulans)).